The chain runs to 527 residues: ATP-dependent RNA helicase DBP3 (527 aa).

Residues 1 to 11 (MSKDHKDKKRK) are compositionally biased toward basic residues. The segment at 1 to 89 (MSKDHKDKKR…TGYSQSPALT (89 aa)) is disordered. Positions 12–24 (HSDEATEEVEKKT) are enriched in basic and acidic residues. The span at 25–44 (KVSKKEKKDKKEKKEKKDKK) shows a compositional bias: basic residues. Positions 45 to 71 (EKKDKSEKKDKSEKKEKKEKKESEDVP) are enriched in basic and acidic residues. Over residues 72 to 89 (TKSSAVVSTGYSQSPALT) the composition is skewed to polar residues. Residues 119–145 (LGFDQIDLDSRIASVISKFPTPTPIQA) carry the Q motif motif. The Helicase ATP-binding domain maps to 148–319 (WPYLLSGKDV…STFMNSPVKV (172 aa)). Position 161–168 (161–168 (AETGSGKT)) interacts with ATP. Residues 266–269 (DEAD) carry the DEAD box motif. Residues 348–497 (KLLSLLRKYQ…PVPDELLKFG (150 aa)) form the Helicase C-terminal domain.

The protein belongs to the DEAD box helicase family. DDX5/DBP2 subfamily.

It is found in the nucleus. Its subcellular location is the nucleolus. The catalysed reaction is ATP + H2O = ADP + phosphate + H(+). Its function is as follows. ATP-dependent RNA helicase required for 60S ribosomal subunit synthesis. Involved in efficient pre-rRNA processing, predominantly at site A3, which is necessary for the normal formation of 25S and 5.8S rRNAs. This is ATP-dependent RNA helicase DBP3 (DBP3) from Debaryomyces hansenii (strain ATCC 36239 / CBS 767 / BCRC 21394 / JCM 1990 / NBRC 0083 / IGC 2968) (Yeast).